Consider the following 341-residue polypeptide: NADH-quinone oxidoreductase subunit H (341 aa).

The next 8 helical transmembrane spans lie at 6–26 (LIVSYLVGFVLLNVLLGLMAY), 76–96 (LVFLVAPLLSFALAPLGAAVI), 118–138 (VAVLYVLALGSVGVYGIILGG), 157–177 (VISYELVLGLSLVGVFILSGS), 198–218 (LPNWYILSQPLAFALFLIAAV), 252–272 (FLAEYINMIVVSLLAATLFLG), 278–298 (FADGVWWLALKALFFLFFYVW), and 313–333 (GLAWKVLLPLALLNIGLTGLV).

The protein belongs to the complex I subunit 1 family. As to quaternary structure, NDH-1 is composed of 14 different subunits. Subunits NuoA, H, J, K, L, M, N constitute the membrane sector of the complex.

The protein resides in the cell membrane. The catalysed reaction is a quinone + NADH + 5 H(+)(in) = a quinol + NAD(+) + 4 H(+)(out). NDH-1 shuttles electrons from NADH, via FMN and iron-sulfur (Fe-S) centers, to quinones in the respiratory chain. The immediate electron acceptor for the enzyme in this species is believed to be ubiquinone. Couples the redox reaction to proton translocation (for every two electrons transferred, four hydrogen ions are translocated across the cytoplasmic membrane), and thus conserves the redox energy in a proton gradient. This subunit may bind ubiquinone. This is NADH-quinone oxidoreductase subunit H from Thermomicrobium roseum (strain ATCC 27502 / DSM 5159 / P-2).